A 988-amino-acid polypeptide reads, in one-letter code: Transcriptional regulator of yeast form adherence 5 (988 aa).

C2H2-type zinc fingers lie at residues 7–29 (YICAFCARAFTRSEHKQRHERSH) and 35–59 (FHCLHCTSSFVRRDLLQRHCRTVHH). The span at 59 to 83 (HTNLNPSTLPSNKSLKNPTTNPLDL) shows a compositional bias: polar residues. 2 disordered regions span residues 59-129 (HTNL…SSVG) and 174-229 (SMES…SNNN). Residues 84–106 (SNNEGTTTTTKTGNRKNNSNKNG) are compositionally biased toward low complexity. 2 stretches are compositionally biased toward polar residues: residues 113 to 129 (TNPNPAVSNDDNRSSVG) and 174 to 208 (SMESDQHSLTTFDSPTSSLGVSMTPSGSTNSEIVL).

Its subcellular location is the nucleus. Functionally, transcription factor required for yeast cell adherence to silicone substrate. The sequence is that of Transcriptional regulator of yeast form adherence 5 (TRY5) from Candida albicans (strain SC5314 / ATCC MYA-2876) (Yeast).